Consider the following 359-residue polypeptide: Histidinol-phosphate aminotransferase (359 aa).

Residue K217 is modified to N6-(pyridoxal phosphate)lysine.

Belongs to the class-II pyridoxal-phosphate-dependent aminotransferase family. Histidinol-phosphate aminotransferase subfamily. Homodimer. Pyridoxal 5'-phosphate serves as cofactor.

The catalysed reaction is L-histidinol phosphate + 2-oxoglutarate = 3-(imidazol-4-yl)-2-oxopropyl phosphate + L-glutamate. It functions in the pathway amino-acid biosynthesis; L-histidine biosynthesis; L-histidine from 5-phospho-alpha-D-ribose 1-diphosphate: step 7/9. This Salmonella typhimurium (strain LT2 / SGSC1412 / ATCC 700720) protein is Histidinol-phosphate aminotransferase (hisC).